The following is a 262-amino-acid chain: 14-3-3-like protein A (262 aa).

The disordered stretch occupies residues 240 to 262 (DNAEEGGDEIKEAASKPEGEGHS). Positions 247-262 (DEIKEAASKPEGEGHS) are enriched in basic and acidic residues.

The protein belongs to the 14-3-3 family.

This Hordeum vulgare (Barley) protein is 14-3-3-like protein A.